The sequence spans 526 residues: MIENIYTSRILILNFGSQYAQLLVRRVRELGVYCELRAWDITEAQIREFAPNGIILSGGPESTLTIDSPRASPYIFMAGVPVLGVCYGMQTIAIQLGGKVNQDMLRREFGYAQVVIIADSPLTRNIQDLINNNQPILNVWMSHSDNITSIPPDFIIVGRTTTCPFAIIANEKKRFYGIQFHPEVTHTCQGHNILKRFVLDICSCQGRWTPNNIKENIINHIKEQVGKENVVLGLSGGVDSTVTAMLLHYAIGVNLTCIFIDNGLLRYNEASNIREIFSKNLSLNIIYVRSEDRFLRALAGIYNPEEKRKIIGRLFSEIFEEQARSLTKTATWLAQGTIYPDIIESAISHVSLTNVIKSHHNVGGLPNTLNLKLIEPLKNLFKDEVRKIGLELGLPFHMLYRHPFPGPGLGIRILGEVKKEDCDLLRKADLIFIEELYKAKLYYKVSQAFAVLLPIYSVGVMGDSRKYERVISLRAVETIDFMTANWSHLSYDFLELVSNRIINEIDGISRVVYDISGKPPATIEWE.

The Glutamine amidotransferase type-1 domain maps to Arg-9–Arg-207. Cys-86 (nucleophile) is an active-site residue. Residues His-181 and Glu-183 contribute to the active site. Residues Trp-208–Arg-401 form the GMPS ATP-PPase domain. An ATP-binding site is contributed by Ser-235–Thr-241.

In terms of assembly, homodimer.

It carries out the reaction XMP + L-glutamine + ATP + H2O = GMP + L-glutamate + AMP + diphosphate + 2 H(+). The protein operates within purine metabolism; GMP biosynthesis; GMP from XMP (L-Gln route): step 1/1. Its function is as follows. Catalyzes the synthesis of GMP from XMP. In Baumannia cicadellinicola subsp. Homalodisca coagulata, this protein is GMP synthase [glutamine-hydrolyzing].